A 175-amino-acid polypeptide reads, in one-letter code: Ribosome maturation factor RimM (175 aa).

A PRC barrel domain is found at 94-166; it reads SDSWYEHELI…FIRLVPPGGL (73 aa).

Belongs to the RimM family. In terms of assembly, binds ribosomal protein uS19.

It localises to the cytoplasm. Functionally, an accessory protein needed during the final step in the assembly of 30S ribosomal subunit, possibly for assembly of the head region. Essential for efficient processing of 16S rRNA. May be needed both before and after RbfA during the maturation of 16S rRNA. It has affinity for free ribosomal 30S subunits but not for 70S ribosomes. The sequence is that of Ribosome maturation factor RimM from Renibacterium salmoninarum (strain ATCC 33209 / DSM 20767 / JCM 11484 / NBRC 15589 / NCIMB 2235).